A 381-amino-acid polypeptide reads, in one-letter code: Ecotin-like protein 3 (381 aa).

The disordered stretch occupies residues 232–381 (EHLEVCPKNN…GSKADPVDGK (150 aa)). Over residues 273–292 (NESSPSRPRLSSTAYWPQEN) the composition is skewed to polar residues. Residues 336–347 (RKAEDDVYEKTM) are compositionally biased toward basic and acidic residues. The span at 363–372 (SASSTKSGNG) shows a compositional bias: polar residues.

This sequence belongs to the protease inhibitor I11 (ecotin) family.

The polypeptide is Ecotin-like protein 3 (Leishmania major).